The primary structure comprises 477 residues: Kinesin-like protein KIN-1 (477 aa).

Residues 3-330 (NVTVCVRFRP…VRFGTRTKLI (328 aa)) form the Kinesin motor domain. 86–93 (GQTGAGKT) lines the ATP pocket. Positions 402–451 (QDAASQEVSLLTQAVEELKETVEELTDENERLRGELELAQEAAAAAAAAR) form a coiled coil.

This sequence belongs to the TRAFAC class myosin-kinesin ATPase superfamily. Kinesin family. KIN-1 subfamily. Widely expressed. Expressed in young roots and leaves, in mature roots, culm, sheath and leaves, and in panicles at various developmental stages. Strongest expression is detected in panicles. In the panicle, expression is detected in anthers, glumme, lemma and palea. In the spikelet, expression is detected in both microsporocyte and the anther walls.

The protein resides in the cytoplasm. In terms of biological role, kinesin-like motor protein that exhibits microtubule-stimulated ATPase activity. Plays an essential role in male meiotic chromosomal dynamics, male gametogenesis and anther dehiscence. May play a minor and nonessential role in regulating meiotic spindle formation. In Oryza sativa subsp. japonica (Rice), this protein is Kinesin-like protein KIN-1.